The sequence spans 147 residues: MFDIGFWELVVIGVVALVVLGPERLPVAIRTASHWIRLIRSTANSVKAELEQELKLQDLHNDLKKAEQLQMNNLSPELQESIEQLKTAAQSVTRPYEQQNTIQPASAVAEVKEEPVAPISVATPDEEPTVIPAARAQPSAEQGEVKP.

The helical transmembrane segment at 1-21 threads the bilayer; that stretch reads MFDIGFWELVVIGVVALVVLG. The interval 114–147 is disordered; it reads EPVAPISVATPDEEPTVIPAARAQPSAEQGEVKP.

Belongs to the TatB family. The Tat system comprises two distinct complexes: a TatABC complex, containing multiple copies of TatA, TatB and TatC subunits, and a separate TatA complex, containing only TatA subunits. Substrates initially bind to the TatABC complex, which probably triggers association of the separate TatA complex to form the active translocon.

The protein localises to the cell inner membrane. Part of the twin-arginine translocation (Tat) system that transports large folded proteins containing a characteristic twin-arginine motif in their signal peptide across membranes. Together with TatC, TatB is part of a receptor directly interacting with Tat signal peptides. TatB may form an oligomeric binding site that transiently accommodates folded Tat precursor proteins before their translocation. The chain is Sec-independent protein translocase protein TatB from Aeromonas hydrophila subsp. hydrophila (strain ATCC 7966 / DSM 30187 / BCRC 13018 / CCUG 14551 / JCM 1027 / KCTC 2358 / NCIMB 9240 / NCTC 8049).